Consider the following 322-residue polypeptide: Mas-related G-protein coupled receptor member X1 (322 aa).

The Extracellular segment spans residues 1-31 (MDPTISTLDTELTPINGTEETLCYKQTLSLT). N-linked (GlcNAc...) asparagine glycosylation is present at asparagine 16. A helical transmembrane segment spans residues 32–52 (VLTCIVSLVGLTGNAVVLWLL). Topologically, residues 53 to 67 (GCRMRRNAFSIYILN) are cytoplasmic. The chain crosses the membrane as a helical span at residues 68–88 (LAAADFLFLSGRLIYSLLSFI). Residues 89-96 (SIPHTISK) lie on the Extracellular side of the membrane. The helical transmembrane segment at 97–117 (ILYPVMMFSYFAGLSFLSAVS) threads the bilayer. Topologically, residues 118-144 (TERCLSVLWPIWYRCHRPTHLSAVVCV) are cytoplasmic. A helical transmembrane segment spans residues 145–165 (LLWALSLLRSILEWMLCGFLF). The Extracellular segment spans residues 166 to 177 (SGADSAWCQTSD). The chain crosses the membrane as a helical span at residues 178 to 198 (FITVAWLIFLCVVLCGSSLVL). The Cytoplasmic portion of the chain corresponds to 199-221 (LIRILCGSRKIPLTRLYVTILLT). Residues 222 to 242 (VLVFLLCGLPFGIQFFLFLWI) form a helical membrane-spanning segment. The Extracellular segment spans residues 243 to 254 (HVDREVLFCHVH). A helical transmembrane segment spans residues 255 to 275 (LVSIFLSALNSSANPIIYFFV). Topologically, residues 276–322 (GSFRQRQNRQNLKLVLQRALQDASEVDEGGGQLPEEILELSGSRLEQ) are cytoplasmic.

The protein belongs to the G-protein coupled receptor 1 family. Mas subfamily. Uniquely localized in a subset of small dorsal root and trigeminal sensory neurons.

The protein localises to the cell membrane. In terms of biological role, orphan receptor. Probably involved in the function of nociceptive neurons. May regulate nociceptor function and/or development, including the sensation or modulation of pain. Potently activated by enkephalins including BAM22 (bovine adrenal medulla peptide 22) and BAM (8-22). BAM22 is the most potent compound and evoked a large and dose-dependent release of intracellular calcium in stably transfected cells. G(alpha)q proteins are involved in the calcium-signaling pathway. Activated by the antimalarial drug, chloroquine. May mediate chloroquine-induced itch, in a histamine-independent manner. The polypeptide is Mas-related G-protein coupled receptor member X1 (MRGPRX1) (Homo sapiens (Human)).